Reading from the N-terminus, the 158-residue chain is Ankyrin repeat domain-containing protein 37 (158 aa).

3 ANK repeats span residues 1–25 (MLLL…SVNA), 30–59 (CKQS…DLNQ), and 63–92 (LGEA…QIDL). Residues 129 to 149 (EHPDRNDCVAVLRQKRSLGSV) carry the Nuclear localization signal motif.

Ubiquitinated by the CRL2(FEM1B) complex, leading to its degradation. In terms of tissue distribution, mainly expressed in testis, small intestine, colon, blood leukocytes and in pancreatic adenocarcinoma cells.

The protein localises to the nucleus. It localises to the cytoplasm. The chain is Ankyrin repeat domain-containing protein 37 from Homo sapiens (Human).